The primary structure comprises 83 residues: Cytochrome b559 subunit alpha (83 aa).

The chain crosses the membrane as a helical span at residues 21-35 (VIHSITIPSLFIAGW). His-23 serves as a coordination point for heme.

It belongs to the PsbE/PsbF family. In terms of assembly, heterodimer of an alpha subunit and a beta subunit. PSII is composed of 1 copy each of membrane proteins PsbA, PsbB, PsbC, PsbD, PsbE, PsbF, PsbH, PsbI, PsbJ, PsbK, PsbL, PsbM, PsbT, PsbX, PsbY, PsbZ, Psb30/Ycf12, at least 3 peripheral proteins of the oxygen-evolving complex and a large number of cofactors. It forms dimeric complexes. Heme b is required as a cofactor.

It is found in the plastid. It localises to the chloroplast thylakoid membrane. Its function is as follows. This b-type cytochrome is tightly associated with the reaction center of photosystem II (PSII). PSII is a light-driven water:plastoquinone oxidoreductase that uses light energy to abstract electrons from H(2)O, generating O(2) and a proton gradient subsequently used for ATP formation. It consists of a core antenna complex that captures photons, and an electron transfer chain that converts photonic excitation into a charge separation. The polypeptide is Cytochrome b559 subunit alpha (Daucus carota (Wild carrot)).